The sequence spans 329 residues: Major outer membrane protein P.IB (329 aa).

Residues 1-19 (MKKSLIALTLAALPVAAMA) form the signal peptide.

It belongs to the Gram-negative porin family. In terms of assembly, homotrimer.

Its subcellular location is the cell outer membrane. Its function is as follows. Serves as a slightly cation selective porin. This Neisseria meningitidis serogroup A / serotype 4A (strain DSM 15465 / Z2491) protein is Major outer membrane protein P.IB (porB).